A 383-amino-acid chain; its full sequence is tRNA-specific 2-thiouridylase MnmA (383 aa).

ATP is bound by residues 31–38 (GLSGGVDS) and Leu-57. Cys-118 acts as the Nucleophile in catalysis. Cys-118 and Cys-217 are disulfide-bonded. Gly-143 contacts ATP. The tract at residues 167-169 (KDQ) is interaction with tRNA. Cys-217 (cysteine persulfide intermediate) is an active-site residue. The segment at 322–323 (RY) is interaction with tRNA.

It belongs to the MnmA/TRMU family.

It is found in the cytoplasm. It carries out the reaction S-sulfanyl-L-cysteinyl-[protein] + uridine(34) in tRNA + AH2 + ATP = 2-thiouridine(34) in tRNA + L-cysteinyl-[protein] + A + AMP + diphosphate + H(+). In terms of biological role, catalyzes the 2-thiolation of uridine at the wobble position (U34) of tRNA, leading to the formation of s(2)U34. The protein is tRNA-specific 2-thiouridylase MnmA of Synechococcus sp. (strain RCC307).